Here is a 599-residue protein sequence, read N- to C-terminus: Dachshund homolog 2 (599 aa).

The DACHbox-N stretch occupies residues 69-155 (RMVDMHGMKV…LITRKDFETL (87 aa)). Disordered regions lie at residues 166-186 (RQMT…PKRS), 237-280 (LQGN…GPQH), and 370-409 (RIPE…MDHH). Residues 237 to 262 (LQGNGSQNGTESEPDDLNSNTGGSES) show a composition bias toward polar residues. Residues 389 to 405 (SQTSSHTSSSVSSSPSQ) are compositionally biased toward low complexity. The tract at residues 453 to 533 (SSVETLLTNI…KTKRKLQEAL (81 aa)) is DACHbox-C. Residues 459-554 (LTNIQGLLKV…QALKQATTSD (96 aa)) are a coiled coil.

The protein belongs to the DACH/dachshund family. In terms of assembly, interacts with SIX6 and EYA2.

Its subcellular location is the nucleus. Its function is as follows. Transcription factor that is involved in regulation of organogenesis. Seems to be a regulator for SIX1 and SIX6. Seems to act as a corepressor of SIX6 in regulating proliferation by directly repressing cyclin-dependent kinase inhibitors, including the p27Kip1 promoter. Is recruited with SIX6 to the p27Kip1 promoter in embryonal retina. SIX6 corepression also seems to involve NCOR1, TBL1, HDAC1 and HDAC3. May be involved together with PAX3, SIX1, and EYA2 in regulation of myogenesis. In the developing somite, expression of DACH2 and PAX3 is regulated by the overlying ectoderm, and DACH2 and PAX3 positively regulate each other's expression. Probably binds to DNA via its DACHbox-N domain. The sequence is that of Dachshund homolog 2 (DACH2) from Homo sapiens (Human).